A 755-amino-acid chain; its full sequence is Dolichyl-phosphate-mannose--protein mannosyltransferase 4 (755 aa).

The segment at 1–23 (MSQTLKKRGGNSSGRKSPTTSNI) is disordered. Asn-11 carries an N-linked (GlcNAc...) asparagine glycan. The segment covering 13 to 23 (SGRKSPTTSNI) has biased composition (polar residues). The next 6 membrane-spanning stretches (helical) occupy residues 92–112 (FFDL…WLIG), 147–167 (IVPI…ACLF), 185–205 (ILLD…YSKF), 212–232 (SFSS…SCVI), 237–257 (VGVF…WILL), and 278–298 (ALII…FAIL). MIR domains are found at residues 325-389 (SKPV…IVPT), 396-454 (GTKV…LRLH), and 466-523 (KKEI…FDLI). The N-linked (GlcNAc...) asparagine glycan is linked to Asn-445. 3 consecutive transmembrane segments (helical) span residues 595–615 (IFFI…SIYI), 640–660 (LYNT…PFFL), and 670–690 (YLPA…FICS). N-linked (GlcNAc...) asparagine glycosylation is present at Asn-691. The helical transmembrane segment at 706–726 (YKIIAVVAACSTAIIWFFFYF) threads the bilayer.

Belongs to the glycosyltransferase 39 family. As to quaternary structure, forms a functional homodimer.

The protein localises to the endoplasmic reticulum membrane. It carries out the reaction a di-trans,poly-cis-dolichyl beta-D-mannosyl phosphate + L-seryl-[protein] = 3-O-(alpha-D-mannosyl)-L-seryl-[protein] + a di-trans,poly-cis-dolichyl phosphate + H(+). The enzyme catalyses a di-trans,poly-cis-dolichyl beta-D-mannosyl phosphate + L-threonyl-[protein] = 3-O-(alpha-D-mannosyl)-L-threonyl-[protein] + a di-trans,poly-cis-dolichyl phosphate + H(+). Its pathway is protein modification; protein glycosylation. Protein mannosyltransferase (PMT) involved in hyphal growth and drug sensitivity. Transfers mannose from Dol-P-mannose to Ser or Thr residues on proteins. PMT1, PMT2 and PMT4 account for most of the protein-O-glycosylation activity, while PMT5 and PMT6 may specifically modulate a much narrower spectrum of target proteins. Accounts for the O-glycosylation of AXL2, responsible for bud site selection, as well as of the SEC20 t-SNARE component. O-glycosylation of SEC20 is essential for its stability. Required for biofilm formation. This is Dolichyl-phosphate-mannose--protein mannosyltransferase 4 from Candida albicans (strain SC5314 / ATCC MYA-2876) (Yeast).